The chain runs to 640 residues: 2-hydroxyacyl-CoA lyase 2 (640 aa).

A helical membrane pass occupies residues 2-22 (VLFLIIAAIIIGLLLWKWLDV). Glu102 is a binding site for thiamine diphosphate. Positions 477 to 557 (DFVGSAAYIV…VIGIVGNDAC (81 aa)) are thiamine pyrophosphate binding. Mg(2+)-binding residues include Asp528 and Asn554.

This sequence belongs to the TPP enzyme family. Mg(2+) is required as a cofactor. Requires thiamine diphosphate as cofactor.

It localises to the endoplasmic reticulum membrane. The enzyme catalyses 2-hydroxyoctadecanoyl-CoA = heptadecanal + formyl-CoA. The catalysed reaction is (2R)-hydroxyhexadecanoyl-CoA = pentadecanal + formyl-CoA. In terms of biological role, endoplasmic reticulum 2-OH acyl-CoA lyase involved in the cleavage (C1 removal) reaction in the fatty acid alpha-oxydation in a thiamine pyrophosphate (TPP)-dependent manner. The chain is 2-hydroxyacyl-CoA lyase 2 from Caenorhabditis elegans.